A 231-amino-acid polypeptide reads, in one-letter code: Homeobox protein engrailed-1a (231 aa).

3 disordered regions span residues 1–29 (MEDQ…AHRN), 43–105 (GCKR…KDSQ), and 121–148 (DRPS…RPRT). Over residues 43–56 (GCKRERERVTRDSG) the composition is skewed to basic and acidic residues. Residues 68 to 102 (DGVSSSASSTVSSPVSSRQSNKVEQGSSKSSSPSK) are compositionally biased toward low complexity. Residues 143-202 (DKRPRTAFTAEQLQRLKAEFQTSRYITEQRRQALARELGLNESQIKIWFQNKRAKIKKSS) constitute a DNA-binding region (homeobox).

This sequence belongs to the engrailed homeobox family.

The protein resides in the nucleus. The sequence is that of Homeobox protein engrailed-1a (eng1a) from Danio rerio (Zebrafish).